The chain runs to 456 residues: Trigger factor (456 aa).

The region spanning 166 to 245 is the PPIase FKBP-type domain; it reads GDYANIDLNA…VNSVKAEELP (80 aa).

The protein belongs to the FKBP-type PPIase family. Tig subfamily.

The protein localises to the cytoplasm. The enzyme catalyses [protein]-peptidylproline (omega=180) = [protein]-peptidylproline (omega=0). In terms of biological role, involved in protein export. Acts as a chaperone by maintaining the newly synthesized protein in an open conformation. Functions as a peptidyl-prolyl cis-trans isomerase. The sequence is that of Trigger factor from Bifidobacterium adolescentis (strain ATCC 15703 / DSM 20083 / NCTC 11814 / E194a).